The primary structure comprises 666 residues: Endogenous retrovirus group K member 7 Gag polyprotein (666 aa).

G2 carries the N-myristoyl glycine lipid modification. Disordered regions lie at residues 165 to 205 and 217 to 264; these read GKGP…NKTQ and ELQY…GSEL. Positions 232 to 247 are enriched in pro residues; that stretch reads GMPPAPQGRAPYPQPP. 2 consecutive CCHC-type zinc fingers follow at residues 544-561 and 580-597; these read GKCY…NCPV and DLCP…QCRS. The disordered stretch occupies residues 598 to 641; it reads KFDKNGQPLSGNEQRGQPQAPQQTGAFPIQPFVPQGFQEQQPPL. Polar residues predominate over residues 604–622; it reads QPLSGNEQRGQPQAPQQTG.

Belongs to the beta type-B retroviral Gag protein family. HERV class-II K(HML-2) gag subfamily. Post-translationally, specific enzymatic cleavages may yield mature proteins. Myristoylation is essential for retroviral assembly. Alteration of the glycine residue leads to a block in the budding of particles and an accumulation of Gag inside the cell.

Its subcellular location is the cell membrane. In terms of biological role, the products of the Gag polyproteins of infectious retroviruses perform highly complex orchestrated tasks during the assembly, budding, maturation, and infection stages of the viral replication cycle. During viral assembly, the proteins form membrane associations and self-associations that ultimately result in budding of an immature virion from the infected cell. Gag precursors also function during viral assembly to selectively bind and package two plus strands of genomic RNA. Endogenous Gag proteins may have kept, lost or modified their original function during evolution. The protein is Endogenous retrovirus group K member 7 Gag polyprotein (ERVK-7) of Homo sapiens (Human).